A 375-amino-acid polypeptide reads, in one-letter code: Chaperone protein DnaJ (375 aa).

Residues 5–70 (DYYSLLEVER…QKRAAYDRYG (66 aa)) form the J domain. The CR-type zinc-finger motif lies at 135–213 (GKTVDIEIDV…CHGEGRCEKH (79 aa)). Zn(2+) contacts are provided by C148, C151, C165, C168, C187, C190, C201, and C204. 4 CXXCXGXG motif repeats span residues 148–155 (CDACHGSG), 165–172 (CDTCHGSG), 187–194 (CPVCQGKG), and 201–208 (CPECHGEG).

It belongs to the DnaJ family. In terms of assembly, homodimer. Zn(2+) serves as cofactor.

It is found in the cytoplasm. Its function is as follows. Participates actively in the response to hyperosmotic and heat shock by preventing the aggregation of stress-denatured proteins and by disaggregating proteins, also in an autonomous, DnaK-independent fashion. Unfolded proteins bind initially to DnaJ; upon interaction with the DnaJ-bound protein, DnaK hydrolyzes its bound ATP, resulting in the formation of a stable complex. GrpE releases ADP from DnaK; ATP binding to DnaK triggers the release of the substrate protein, thus completing the reaction cycle. Several rounds of ATP-dependent interactions between DnaJ, DnaK and GrpE are required for fully efficient folding. Also involved, together with DnaK and GrpE, in the DNA replication of plasmids through activation of initiation proteins. The sequence is that of Chaperone protein DnaJ from Zymomonas mobilis subsp. mobilis (strain ATCC 31821 / ZM4 / CP4).